The primary structure comprises 217 residues: Large ribosomal subunit protein uL3 (217 aa).

This sequence belongs to the universal ribosomal protein uL3 family. Part of the 50S ribosomal subunit. Forms a cluster with proteins L14 and L19.

Its function is as follows. One of the primary rRNA binding proteins, it binds directly near the 3'-end of the 23S rRNA, where it nucleates assembly of the 50S subunit. This Mycobacterium leprae (strain TN) protein is Large ribosomal subunit protein uL3.